The following is a 797-amino-acid chain: Leucine-rich repeat-containing protein AAC1 (797 aa).

The span at Met-1–Thr-12 shows a compositional bias: basic and acidic residues. Disordered stretches follow at residues Met-1 to Thr-20, Tyr-51 to Thr-103, Asn-125 to Thr-148, and His-307 to Ala-333. Polar residues predominate over residues Asn-55 to Ser-81. A compositionally biased stretch (low complexity) spans Thr-82–Thr-103. A compositionally biased stretch (pro residues) spans Ser-313–Ile-326. 10 LRR repeats span residues Lys-376–Ser-397, Thr-406–Ser-425, Val-435–Lys-456, Gln-464–Lys-484, Ser-492–Lys-513, Ser-514–Ser-535, Ser-543–Ser-564, Thr-572–Val-593, Ser-601–Gln-622, and Pro-633–Ile-653.

This is Leucine-rich repeat-containing protein AAC1 (AAC1) from Dictyostelium discoideum (Social amoeba).